A 422-amino-acid chain; its full sequence is UDP-N-acetylglucosamine 1-carboxyvinyltransferase (422 aa).

Position 22 to 23 (22 to 23 (KN)) interacts with phosphoenolpyruvate. R95 provides a ligand contact to UDP-N-acetyl-alpha-D-glucosamine. C119 functions as the Proton donor in the catalytic mechanism. Position 119 is a 2-(S-cysteinyl)pyruvic acid O-phosphothioketal (C119). Residues 124-128 (RPIDQ), D309, and V331 each bind UDP-N-acetyl-alpha-D-glucosamine.

This sequence belongs to the EPSP synthase family. MurA subfamily.

It localises to the cytoplasm. The catalysed reaction is phosphoenolpyruvate + UDP-N-acetyl-alpha-D-glucosamine = UDP-N-acetyl-3-O-(1-carboxyvinyl)-alpha-D-glucosamine + phosphate. Its pathway is cell wall biogenesis; peptidoglycan biosynthesis. Cell wall formation. Adds enolpyruvyl to UDP-N-acetylglucosamine. The sequence is that of UDP-N-acetylglucosamine 1-carboxyvinyltransferase from Anaeromyxobacter sp. (strain Fw109-5).